The sequence spans 289 residues: ATP synthase gamma chain (289 aa).

Belongs to the ATPase gamma chain family. In terms of assembly, F-type ATPases have 2 components, CF(1) - the catalytic core - and CF(0) - the membrane proton channel. CF(1) has five subunits: alpha(3), beta(3), gamma(1), delta(1), epsilon(1). CF(0) has three main subunits: a, b and c.

The protein resides in the cell inner membrane. In terms of biological role, produces ATP from ADP in the presence of a proton gradient across the membrane. The gamma chain is believed to be important in regulating ATPase activity and the flow of protons through the CF(0) complex. In Acinetobacter baumannii (strain AB307-0294), this protein is ATP synthase gamma chain.